The chain runs to 352 residues: MSKQPSLSYKDAGVDIDAGEALVERIKGVAKRTARPEVMGGLGGFGALCEIPAGYKQPVLVSGTDGVGTKLRLALNLNKHDSIGQDLVAMCVNDLVVCGAEPLFFLDYYATGKLNVDVAATVVTGIGAGCELAGCSLVGGETAEMPGMYEGEDYDLAGFCVGVVEKAEIIDGSKVATGDALIALPSSGPHSNGYSLIRKILEVSATDIENTQLDGKPLTDLLMAPTRIYVKPLLQLIKNTGAVKAMAHITGGGLLDNIPRVLPKNAQAVVDVASWQRPAVFDFLQEKGNVDEHEMHRVLNCGVGMVICVAQDQVEAALNELRAAGEQPWVIGHIAEAAEGAAQVELQNLKAH.

Belongs to the AIR synthase family.

The protein localises to the cytoplasm. The catalysed reaction is 2-formamido-N(1)-(5-O-phospho-beta-D-ribosyl)acetamidine + ATP = 5-amino-1-(5-phospho-beta-D-ribosyl)imidazole + ADP + phosphate + H(+). It functions in the pathway purine metabolism; IMP biosynthesis via de novo pathway; 5-amino-1-(5-phospho-D-ribosyl)imidazole from N(2)-formyl-N(1)-(5-phospho-D-ribosyl)glycinamide: step 2/2. This is Phosphoribosylformylglycinamidine cyclo-ligase from Pseudomonas putida (strain GB-1).